Consider the following 350-residue polypeptide: Protein-glutamate methylesterase/protein-glutamine glutaminase 1 (350 aa).

Positions 1 to 116 (MVVDDSAVVR…KGFLHDSAKV (116 aa)) constitute a Response regulatory domain. Asp50 bears the 4-aspartylphosphate mark. In terms of domain architecture, CheB-type methylesterase spans 160–350 (LKTTEQLVAI…IPQAILDCSH (191 aa)). Catalysis depends on residues Ser172, His198, and Asp294.

The protein belongs to the CheB family. Post-translationally, phosphorylated by CheA. Phosphorylation of the N-terminal regulatory domain activates the methylesterase activity.

Its subcellular location is the cytoplasm. The enzyme catalyses [protein]-L-glutamate 5-O-methyl ester + H2O = L-glutamyl-[protein] + methanol + H(+). It carries out the reaction L-glutaminyl-[protein] + H2O = L-glutamyl-[protein] + NH4(+). Its function is as follows. Involved in chemotaxis. Part of a chemotaxis signal transduction system that modulates chemotaxis in response to various stimuli. Catalyzes the demethylation of specific methylglutamate residues introduced into the chemoreceptors (methyl-accepting chemotaxis proteins or MCP) by CheR. Also mediates the irreversible deamidation of specific glutamine residues to glutamic acid. The polypeptide is Protein-glutamate methylesterase/protein-glutamine glutaminase 1 (Photobacterium profundum (strain SS9)).